The primary structure comprises 121 residues: Darcynin homolog (121 aa).

The protein belongs to the darcynin family.

In Streptomyces avermitilis (strain ATCC 31267 / DSM 46492 / JCM 5070 / NBRC 14893 / NCIMB 12804 / NRRL 8165 / MA-4680), this protein is Darcynin homolog.